The sequence spans 148 residues: Coactosin (148 aa).

One can recognise an ADF-H domain in the interval 1–134 (MSGFDLSEVA…VEDEIAAKIK (134 aa)). The short motif at 71–76 (DEESKR) is the F-loop; important for stable binding to G-actin and F-actin element. Ser147 carries the phosphoserine modification.

Belongs to the actin-binding proteins ADF family. Coactosin subfamily. In terms of assembly, interacts with 14-3-3 protein 3. Phosphorylation at Ser-147 appears not to affect its binding to actin; however, it may regulate phagocytosis and motility.

It is found in the cytoplasm. Its subcellular location is the cell projection. The protein localises to the phagocytic cup. The protein resides in the pseudopodium. It localises to the cell membrane. It is found in the cytoskeleton. Functionally, actin-binding protein which is involved in F-actin stabilization. May play a role during phagocytosis and pseudopod formation by contributing to the maintenance of F-actin. This is Coactosin from Entamoeba histolytica (strain ATCC 30459 / HM-1:IMSS / ABRM).